A 218-amino-acid polypeptide reads, in one-letter code: Small ribosomal subunit protein uS5 (218 aa).

The span at 1–10 (MTQATNQTPG) shows a compositional bias: polar residues. A disordered region spans residues 1-63 (MTQATNQTPG…GRDERDSEWQ (63 aa)). The span at 11–25 (QDVPGAADVPAAAEG) shows a compositional bias: low complexity. A compositionally biased stretch (basic and acidic residues) spans 31 to 63 (GERRGGGGGRGGDRRGRGDRRGRGRDERDSEWQ). The 64-residue stretch at 62 to 125 (WQERVIQIRR…ADGKKHLVKV (64 aa)) folds into the S5 DRBM domain.

Belongs to the universal ribosomal protein uS5 family. As to quaternary structure, part of the 30S ribosomal subunit. Contacts proteins S4 and S8.

Functionally, with S4 and S12 plays an important role in translational accuracy. Its function is as follows. Located at the back of the 30S subunit body where it stabilizes the conformation of the head with respect to the body. The polypeptide is Small ribosomal subunit protein uS5 (Synechococcus sp. (strain RCC307)).